The sequence spans 320 residues: Cytochrome f (320 aa).

The signal sequence occupies residues 1–35 (MENRNTFSWVKEQITRSISVSIMIYVITRTSISNA). Residues Tyr36, Cys56, Cys59, and His60 each contribute to the heme site. Residues 286 to 306 (VQGLLFFFASVILAQVFLVLK) form a helical membrane-spanning segment.

Belongs to the cytochrome f family. In terms of assembly, the 4 large subunits of the cytochrome b6-f complex are cytochrome b6, subunit IV (17 kDa polypeptide, petD), cytochrome f and the Rieske protein, while the 4 small subunits are PetG, PetL, PetM and PetN. The complex functions as a dimer. The cofactor is heme.

The protein resides in the plastid. It localises to the chloroplast thylakoid membrane. In terms of biological role, component of the cytochrome b6-f complex, which mediates electron transfer between photosystem II (PSII) and photosystem I (PSI), cyclic electron flow around PSI, and state transitions. This is Cytochrome f from Hordeum vulgare (Barley).